The following is a 323-amino-acid chain: Elongation factor P--(R)-beta-lysine ligase (323 aa).

76-78 lines the substrate pocket; that stretch reads SPE. ATP-binding positions include 100-102 and Asn-109; that span reads RNE. Residue Tyr-118 coordinates substrate. Residue 242-243 participates in ATP binding; that stretch reads EL. Glu-249 contributes to the substrate binding site. Position 298 (Gly-298) interacts with ATP.

Belongs to the class-II aminoacyl-tRNA synthetase family. EpmA subfamily. As to quaternary structure, homodimer.

The catalysed reaction is D-beta-lysine + L-lysyl-[protein] + ATP = N(6)-((3R)-3,6-diaminohexanoyl)-L-lysyl-[protein] + AMP + diphosphate + H(+). With EpmB is involved in the beta-lysylation step of the post-translational modification of translation elongation factor P (EF-P). Catalyzes the ATP-dependent activation of (R)-beta-lysine produced by EpmB, forming a lysyl-adenylate, from which the beta-lysyl moiety is then transferred to the epsilon-amino group of a conserved specific lysine residue in EF-P. The polypeptide is Elongation factor P--(R)-beta-lysine ligase (Haemophilus influenzae (strain PittGG)).